A 160-amino-acid chain; its full sequence is Surface-adhesin protein E (160 aa).

The N-terminal stretch at 1-15 (MKKIILTLSLGLLTA) is a signal peptide. Residue Cys16 is the site of N-palmitoyl cysteine attachment. Cys16 is lipidated: S-diacylglycerol cysteine. The interaction with laminin and plasminogen stretch occupies residues 41–68 (IRLVKNVNYYIDSESIWVDNQEPQIVHF). Residues 84-108 (PKRYARSVRQYKILNCANYHLTQVR) are interaction with vitronectin and epithelial cells.

As to quaternary structure, homodimer. Interacts with host vitronectin, laminin and plasminogen. Can interact with both immobilized and soluble vitronectin.

It is found in the cell outer membrane. The protein localises to the cell surface. Acts as a multifunctional adhesin involved in direct interactions with host epithelial cells and host proteins, including vitronectin, laminin and plasminogen. In addition, interaction with serum vitronectin plays an important role in bacterial serum resistance, and conversion of plasminogen to plasmin at the cell surface aids in immune evasion and contributes to bacterial virulence. Induces a pro-inflammatory epithelial cell response, leading to interleukin-8 (IL-8) secretion and up-regulation of ICAM1. This Haemophilus influenzae (strain NTHi 3655) protein is Surface-adhesin protein E (pe).